The sequence spans 643 residues: Arginine--tRNA ligase, mitochondrial (643 aa).

The 'HIGH' region signature appears at 188 to 198 (PNIAKPFHAGH).

This sequence belongs to the class-I aminoacyl-tRNA synthetase family.

Its subcellular location is the mitochondrion matrix. The enzyme catalyses tRNA(Arg) + L-arginine + ATP = L-arginyl-tRNA(Arg) + AMP + diphosphate. In Saccharomyces cerevisiae (strain ATCC 204508 / S288c) (Baker's yeast), this protein is Arginine--tRNA ligase, mitochondrial (MSR1).